The chain runs to 433 residues: Enolase (433 aa).

Gln-167 serves as a coordination point for (2R)-2-phosphoglycerate. Glu-209 functions as the Proton donor in the catalytic mechanism. Residues Asp-246, Glu-291, and Asp-318 each coordinate Mg(2+). (2R)-2-phosphoglycerate contacts are provided by Lys-343, Arg-372, Ser-373, and Lys-394. Lys-343 functions as the Proton acceptor in the catalytic mechanism.

The protein belongs to the enolase family. As to quaternary structure, component of the RNA degradosome, a multiprotein complex involved in RNA processing and mRNA degradation. Requires Mg(2+) as cofactor.

It localises to the cytoplasm. The protein resides in the secreted. It is found in the cell surface. It carries out the reaction (2R)-2-phosphoglycerate = phosphoenolpyruvate + H2O. Its pathway is carbohydrate degradation; glycolysis; pyruvate from D-glyceraldehyde 3-phosphate: step 4/5. Catalyzes the reversible conversion of 2-phosphoglycerate (2-PG) into phosphoenolpyruvate (PEP). It is essential for the degradation of carbohydrates via glycolysis. This is Enolase from Photorhabdus laumondii subsp. laumondii (strain DSM 15139 / CIP 105565 / TT01) (Photorhabdus luminescens subsp. laumondii).